The sequence spans 323 residues: Elongation factor P--(R)-beta-lysine ligase (323 aa).

A substrate-binding site is contributed by 76–78 (SPE). ATP contacts are provided by residues 100–102 (RNE) and N109. Y118 is a binding site for substrate. Position 242 to 243 (242 to 243 (EL)) interacts with ATP. Substrate is bound at residue E249. G298 provides a ligand contact to ATP.

Belongs to the class-II aminoacyl-tRNA synthetase family. EpmA subfamily. In terms of assembly, homodimer.

The catalysed reaction is D-beta-lysine + L-lysyl-[protein] + ATP = N(6)-((3R)-3,6-diaminohexanoyl)-L-lysyl-[protein] + AMP + diphosphate + H(+). With EpmB is involved in the beta-lysylation step of the post-translational modification of translation elongation factor P (EF-P). Catalyzes the ATP-dependent activation of (R)-beta-lysine produced by EpmB, forming a lysyl-adenylate, from which the beta-lysyl moiety is then transferred to the epsilon-amino group of a conserved specific lysine residue in EF-P. In Histophilus somni (strain 129Pt) (Haemophilus somnus), this protein is Elongation factor P--(R)-beta-lysine ligase.